The sequence spans 149 residues: Large ribosomal subunit protein bL9 (149 aa).

This sequence belongs to the bacterial ribosomal protein bL9 family.

Its function is as follows. Binds to the 23S rRNA. The polypeptide is Large ribosomal subunit protein bL9 (Xanthomonas campestris pv. campestris (strain 8004)).